Consider the following 586-residue polypeptide: Phosphatase and actin regulator 1 (586 aa).

A Nuclear localization signal motif is present at residues 62–83 (RRRSKFATLGRLFKPWKWRKKK). One copy of the RPEL 1 repeat lies at 92–117 (AALERKISMRQSREELIKRGVLKEMY). The tract at residues 373 to 414 (ECEDDKENVPHETSYDDSSCLYSRDEEEDDDDDDDDEDDDSS) is disordered. The segment covering 397–413 (DEEEDDDDDDDDEDDDS) has biased composition (acidic residues). 3 RPEL repeats span residues 428 to 453 (DSLA…PMQT), 466 to 491 (TKLT…KPRN), and 504 to 529 (RRLT…ISFS).

The protein belongs to the phosphatase and actin regulator family. As to quaternary structure, interacts (via RPEL repeats) with ACTA1.

The protein resides in the cytoplasm. Its subcellular location is the synapse. It is found in the nucleus. In terms of biological role, binds actin monomers (G actin) and plays a role in the reorganization of the actin cytoskeleton and in formation of actin stress fibers. The polypeptide is Phosphatase and actin regulator 1 (phactr1) (Xenopus laevis (African clawed frog)).